A 311-amino-acid chain; its full sequence is Mitochondrial arginine transporter BAC1 (311 aa).

3 Solcar repeats span residues 12–101, 111–203, and 219–305; these read FGFY…AKLF, PRPE…LRYH, and VDMG…SMKM. 6 helical membrane passes run 18-38, 76-96, 113-133, 178-197, 222-242, and 288-308; these read YVAG…FDTV, GATS…GIYS, PEII…VLCP, GGSA…FTVY, GIGV…VLPF, and AFPA…MLGI.

Belongs to the mitochondrial carrier (TC 2.A.29) family. As to expression, high expression in flowers and siliques. Lower expression in leaves and stems.

The protein localises to the mitochondrion inner membrane. Inhibited by mercuric chloride. In terms of biological role, mitochondrial arginine transporter that catalyzes the counter-exchange of arginine with lysine, ornithine, arginine and histidine. Substrate preference in reconstituted proteoliposomes is arginine &gt; lysine &gt; ornithine &gt; histidine. May be involved in the delivery of arginine, released from seed reserves, to mitochondrial arginase and the export of ornithine. The polypeptide is Mitochondrial arginine transporter BAC1 (BAC1) (Arabidopsis thaliana (Mouse-ear cress)).